The following is a 324-amino-acid chain: Acetyl-coenzyme A carboxylase carboxyl transferase subunit alpha (324 aa).

The CoA carboxyltransferase C-terminal domain maps to 37-291; it reads ILEEKLENLE…DLMIRKTFEQ (255 aa).

Belongs to the AccA family. In terms of assembly, acetyl-CoA carboxylase is a heterohexamer composed of biotin carboxyl carrier protein (AccB), biotin carboxylase (AccC) and two subunits each of ACCase subunit alpha (AccA) and ACCase subunit beta (AccD).

It localises to the cytoplasm. The enzyme catalyses N(6)-carboxybiotinyl-L-lysyl-[protein] + acetyl-CoA = N(6)-biotinyl-L-lysyl-[protein] + malonyl-CoA. Its pathway is lipid metabolism; malonyl-CoA biosynthesis; malonyl-CoA from acetyl-CoA: step 1/1. Functionally, component of the acetyl coenzyme A carboxylase (ACC) complex. First, biotin carboxylase catalyzes the carboxylation of biotin on its carrier protein (BCCP) and then the CO(2) group is transferred by the carboxyltransferase to acetyl-CoA to form malonyl-CoA. This Bacillus cereus (strain B4264) protein is Acetyl-coenzyme A carboxylase carboxyl transferase subunit alpha.